The sequence spans 347 residues: MISEAPPFWWRKADWRAWMLAPLSFVYGRVAGHRMAHARRASVSIPVICVGNFTVGGAGKTPTALTIARAAKAKGLKPGFLSRGYGGSLDVTTVVDPHHHRAVAVGDEPLLLAQEALTVISRRRVDGAHRLVAEGADLIIMDDGFQSARLAIDYALLVIDATRGLGNGHIVPAGPVRAPIGQQLRSATALLKVGGGQAADRIVRMAARAAKPYFTASLKVRGDDRLTGIRVLAFAGIADPAKFFRTVESRGAEITVAKTFGDHEHLSEDEIGDILTTAERQDLLIVTTSKDFVRLSGHHGKAQELAQQCRVIEVDMVFDDHLAPGLIIDRAIVACRERRLREMKTKS.

54–61 is an ATP binding site; the sequence is TVGGAGKT.

Belongs to the LpxK family.

It catalyses the reaction a lipid A disaccharide + ATP = a lipid IVA + ADP + H(+). Its pathway is glycolipid biosynthesis; lipid IV(A) biosynthesis; lipid IV(A) from (3R)-3-hydroxytetradecanoyl-[acyl-carrier-protein] and UDP-N-acetyl-alpha-D-glucosamine: step 6/6. In terms of biological role, transfers the gamma-phosphate of ATP to the 4'-position of a tetraacyldisaccharide 1-phosphate intermediate (termed DS-1-P) to form tetraacyldisaccharide 1,4'-bis-phosphate (lipid IVA). This Rhizobium etli (strain CIAT 652) protein is Tetraacyldisaccharide 4'-kinase.